We begin with the raw amino-acid sequence, 390 residues long: EF-hand calcium-binding domain-containing protein 4A (390 aa).

Low complexity predominate over residues 1–27; sequence MSPRSTLRSPLPSRTARSSASSDTPSP. A disordered region spans residues 1-37; the sequence is MSPRSTLRSPLPSRTARSSASSDTPSPGADRQDRMSK. EF-hand domains are found at residues 33–66 and 67–102; these read DRMSKAKELFVLCDKEGKGFITKRDMQRLQQELP and LSPEQLESVFESLDRDRNGYLTPLEFHTGLGELVGS. The Ca(2+) site is built by D80, D82, N84, Y86, and E91. The stretch at 173–357 forms a coiled coil; sequence SHLQDALKEK…DDKDAHQAQK (185 aa). The tract at residues 206–234 is disordered; sequence DMESQLKEERERRQALDSMRQGDKKEQLL.

Belongs to the EFCAB4 family.

In Danio rerio (Zebrafish), this protein is EF-hand calcium-binding domain-containing protein 4A (cracr2b).